A 596-amino-acid chain; its full sequence is A-type ATP synthase subunit A (596 aa).

241–248 (GPFGSGKT) contacts ATP.

This sequence belongs to the ATPase alpha/beta chains family. As to quaternary structure, has multiple subunits with at least A(3), B(3), C, D, E, F, H, I and proteolipid K(x).

The protein localises to the cell membrane. It catalyses the reaction ATP + H2O + 4 H(+)(in) = ADP + phosphate + 5 H(+)(out). In terms of biological role, component of the A-type ATP synthase that produces ATP from ADP in the presence of a proton gradient across the membrane. The A chain is the catalytic subunit. The sequence is that of A-type ATP synthase subunit A from Ignicoccus hospitalis (strain KIN4/I / DSM 18386 / JCM 14125).